The sequence spans 66 residues: Large ribosomal subunit protein bL31 (66 aa).

4 residues coordinate Zn(2+): Cys16, Cys18, Cys36, and Cys39.

This sequence belongs to the bacterial ribosomal protein bL31 family. Type A subfamily. Part of the 50S ribosomal subunit. Requires Zn(2+) as cofactor.

Functionally, binds the 23S rRNA. The chain is Large ribosomal subunit protein bL31 from Thermodesulfovibrio yellowstonii (strain ATCC 51303 / DSM 11347 / YP87).